The chain runs to 366 residues: Glucose 1-dehydrogenase (366 aa).

Cysteine 39 contributes to the Zn(2+) binding site. Threonine 41 contributes to the substrate binding site. Residues histidine 66 and glutamate 67 each coordinate Zn(2+). Residue asparagine 89 coordinates substrate. The Zn(2+) site is built by cysteine 93, cysteine 96, cysteine 99, and cysteine 107. Positions 114, 150, and 154 each coordinate substrate. Glutamine 150 contributes to the Zn(2+) binding site. Residues 189–192 (TGPI), 211–213 (NRR), 277–279 (FGF), 305–307 (LVN), and lysine 354 contribute to the NADP(+) site. Position 307 (asparagine 307) interacts with substrate.

It belongs to the zinc-containing alcohol dehydrogenase family. Glucose 1-dehydrogenase subfamily. Homotetramer. The cofactor is Zn(2+).

It catalyses the reaction D-glucose + NAD(+) = D-glucono-1,5-lactone + NADH + H(+). The catalysed reaction is D-glucose + NADP(+) = D-glucono-1,5-lactone + NADPH + H(+). The enzyme catalyses D-galactose + NAD(+) = D-galactono-1,4-lactone + NADH + H(+). It carries out the reaction D-galactose + NADP(+) = D-galactono-1,5-lactone + NADPH + H(+). It catalyses the reaction an aldopyranose + NAD(+) = aldono-1,5-lactone + NADH + H(+). The catalysed reaction is an aldopyranose + NADP(+) = aldono-1,5-lactone + NADPH + H(+). With respect to regulation, inhibited by EDTA in vitro. Its function is as follows. Catalyzes the NAD(P)(+)-dependent oxidation of D-glucose to D-gluconate via gluconolactone. Displays broad substrate specificity since it is able to catalyze the oxidation of a number of alternative aldose sugars, such as D-galactose, D-xylose and L-arabinose, to the corresponding glyconate. Can utilize both NAD(+) and NADP(+) as electron acceptor. Physiologically, seems to be involved in the degradation of both glucose and galactose through a non-phosphorylative variant of the Entner-Doudoroff pathway. In Saccharolobus solfataricus (Sulfolobus solfataricus), this protein is Glucose 1-dehydrogenase.